The primary structure comprises 542 residues: Chaperonin GroEL 2 (542 aa).

Residues 30 to 33, K51, 87 to 91, G415, and D496 contribute to the ATP site; these read TLGP and DGTTT.

The protein belongs to the chaperonin (HSP60) family. In terms of assembly, forms a cylinder of 14 subunits composed of two heptameric rings stacked back-to-back. Interacts with the co-chaperonin GroES.

The protein resides in the cytoplasm. The catalysed reaction is ATP + H2O + a folded polypeptide = ADP + phosphate + an unfolded polypeptide.. Together with its co-chaperonin GroES, plays an essential role in assisting protein folding. The GroEL-GroES system forms a nano-cage that allows encapsulation of the non-native substrate proteins and provides a physical environment optimized to promote and accelerate protein folding. In Rhizobium leguminosarum, this protein is Chaperonin GroEL 2.